A 462-amino-acid polypeptide reads, in one-letter code: Polygalacturonase (462 aa).

An N-terminal signal peptide occupies residues 1–22 (MALTRLLLPISILWFCFYSSHT). An N-linked (GlcNAc...) asparagine glycan is attached at Asn-173. The active-site Proton donor is Asp-278. A disulfide bond links Cys-280 and Cys-297. N-linked (GlcNAc...) asparagine glycosylation occurs at Asn-294. His-301 is a catalytic residue. An N-linked (GlcNAc...) asparagine glycan is attached at Asn-358. Disulfide bonds link Cys-407–Cys-413 and Cys-435–Cys-460.

This sequence belongs to the glycosyl hydrolase 28 family.

The protein resides in the secreted. The protein localises to the cell wall. The catalysed reaction is (1,4-alpha-D-galacturonosyl)n+m + H2O = (1,4-alpha-D-galacturonosyl)n + (1,4-alpha-D-galacturonosyl)m.. Its function is as follows. Acts in concert with the pectinesterase, in the ripening process. Is involved in cell wall metabolism, specifically in polyuronide degradation. The sequence is that of Polygalacturonase from Persea americana (Avocado).